The primary structure comprises 707 residues: Eomesodermin homolog (707 aa).

Residues Gly-27 to Ser-42 are compositionally biased toward gly residues. The interval Gly-27–Pro-125 is disordered. Residues Ala-73–Ala-93 show a composition bias toward low complexity. Ser-117 bears the Phosphoserine mark. Positions Leu-278–Asp-458 form a DNA-binding region, T-box. Thr-473 is modified (phosphothreonine). Residues Ala-592–Pro-707 form a required for transcription activation region. The disordered stretch occupies residues Thr-642–Tyr-689. The span at Ser-648–Tyr-657 shows a compositional bias: polar residues. Positions Ser-667–Pro-678 are enriched in low complexity. The segment covering Lys-680–Tyr-689 has biased composition (basic and acidic residues).

As to expression, expressed in CD8+ T-cells.

The protein resides in the nucleus. In terms of biological role, functions as a transcriptional activator playing a crucial role during development. Functions in trophoblast differentiation and later in gastrulation, regulating both mesoderm delamination and endoderm specification. Plays a role in brain development being required for the specification and the proliferation of the intermediate progenitor cells and their progeny in the cerebral cortex. Required for differentiation and migration of unipolar dendritic brush cells. Also involved in the differentiation of CD8+ T-cells during immune response regulating the expression of lytic effector genes. In Mus musculus (Mouse), this protein is Eomesodermin homolog (Eomes).